The primary structure comprises 227 residues: Ribonuclease 3 (227 aa).

The 123-residue stretch at 5-127 (YQKLSRRIGY…IIGAMYLDAG (123 aa)) folds into the RNase III domain. Residue Glu40 coordinates Mg(2+). Residue Asp44 is part of the active site. 2 residues coordinate Mg(2+): Asp113 and Glu116. Residue Glu116 is part of the active site. Residues 154-224 (DAKTRLQEFL…AAKALKKLEK (71 aa)) enclose the DRBM domain.

Belongs to the ribonuclease III family. Homodimer. The cofactor is Mg(2+).

Its subcellular location is the cytoplasm. It catalyses the reaction Endonucleolytic cleavage to 5'-phosphomonoester.. Digests double-stranded RNA. Involved in the processing of primary rRNA transcript to yield the immediate precursors to the large and small rRNAs (23S and 16S). Processes some mRNAs, and tRNAs when they are encoded in the rRNA operon. Processes pre-crRNA and tracrRNA of type II CRISPR loci if present in the organism. This chain is Ribonuclease 3, found in Marinomonas sp. (strain MWYL1).